The chain runs to 1584 residues: Dicer-like protein 1 (1584 aa).

The interval 31–60 (EDVVSDNDDRGNASDVESEDGVKRWTVNPE) is disordered. The 182-residue stretch at 129 to 310 (LFERAKQQNT…RAAAELEALL (182 aa)) folds into the Helicase ATP-binding domain. An ATP-binding site is contributed by 142–149 (LDTGSGKT). The DEAH box signature appears at 255–258 (DEAH). In terms of domain architecture, Helicase C-terminal spans 448–621 (KVIMLVRILR…EALPEDRKLT (174 aa)). Positions 654 to 744 (SLVCLANFTA…QSVFTKQLPE (91 aa)) constitute a Dicer dsRNA-binding fold domain. Residues 894-1028 (KALAYVSENE…LILEPMRISP (135 aa)) enclose the PAZ domain. 2 consecutive RNase III domains span residues 1052–1207 (VALD…LTGQ) and 1258–1424 (AKKF…VDSE). Glutamate 1298, aspartate 1410, and glutamate 1413 together coordinate Mg(2+). In terms of domain architecture, DRBM spans 1458-1545 (TFVANMMAHK…AKKAIKLLEG (88 aa)). Zn(2+) is bound by residues cysteine 1470, histidine 1516, cysteine 1557, and cysteine 1559.

It belongs to the helicase family. Dicer subfamily. Mg(2+) is required as a cofactor. Mn(2+) serves as cofactor.

In terms of biological role, dicer-like endonuclease involved in cleaving double-stranded RNA in the RNA interference (RNAi) pathway. Produces 21 to 25 bp dsRNAs (siRNAs) which target the selective destruction of homologous RNAs leading to sequence-specific suppression of gene expression, called post-transcriptional gene silencing (PTGS). Part of a broad host defense response against viral infection and transposons. Controls the expression of the non-LTR retrotransposon Tad in the African strain, Adiomopoume. The protein is Dicer-like protein 1 (dcl-1) of Neurospora crassa (strain ATCC 24698 / 74-OR23-1A / CBS 708.71 / DSM 1257 / FGSC 987).